The chain runs to 1026 residues: Multidrug resistance protein MdtC (1026 aa).

Helical transmembrane passes span Ile15–Ala35, Glu333–Leu353, Leu360–Cys380, Leu387–Leu407, Val431–Leu451, Phe463–Pro483, Leu528–Pro548, Leu853–Ser873, Leu897–Val917, Pro953–Gly973, and Ile984–Val1004.

This sequence belongs to the resistance-nodulation-cell division (RND) (TC 2.A.6) family. MdtC subfamily. As to quaternary structure, part of a tripartite efflux system composed of MdtA, MdtB and MdtC. MdtC forms a heteromultimer with MdtB.

The protein localises to the cell inner membrane. The chain is Multidrug resistance protein MdtC from Salmonella paratyphi A (strain ATCC 9150 / SARB42).